The following is a 217-amino-acid chain: Adenylate kinase (217 aa).

10–15 (GIGKGT) lines the ATP pocket. The NMP stretch occupies residues 30-59 (STGDIFRKNFKENTELGTLSKKFIAQGLLV). AMP-binding positions include Thr31, Arg36, 57 to 59 (LLV), 85 to 88 (GFPR), and Gln92. The interval 126–163 (GRRICPECGKVYHIEKIPPKNPGICDKDQKTLIQREDD) is LID. Arg127 provides a ligand contact to ATP. The Zn(2+) site is built by Cys130 and Cys133. 136-137 (VY) serves as a coordination point for ATP. Positions 150 and 153 each coordinate Zn(2+). Residues Arg160 and Arg171 each contribute to the AMP site. Gln199 is a binding site for ATP.

The protein belongs to the adenylate kinase family. As to quaternary structure, monomer.

It is found in the cytoplasm. The catalysed reaction is AMP + ATP = 2 ADP. It functions in the pathway purine metabolism; AMP biosynthesis via salvage pathway; AMP from ADP: step 1/1. Functionally, catalyzes the reversible transfer of the terminal phosphate group between ATP and AMP. Plays an important role in cellular energy homeostasis and in adenine nucleotide metabolism. This is Adenylate kinase from Aster yellows witches'-broom phytoplasma (strain AYWB).